The primary structure comprises 1159 residues: ATP-dependent helicase/deoxyribonuclease subunit B (1159 aa).

The UvrD-like helicase ATP-binding domain occupies 1–401 (MSIRFVYGRS…LLKNWSYESV (401 aa)). Residue 8-15 (GRSGTGKS) participates in ATP binding. The UvrD-like helicase C-terminal domain maps to 279 to 582 (PYRFKGNLEL…NIGDIARIKG (304 aa)). [4Fe-4S] cluster contacts are provided by C787, C1106, C1109, and C1115.

The protein belongs to the helicase family. AddB/RexB type 1 subfamily. Heterodimer of AddA and AddB. Requires Mg(2+) as cofactor. [4Fe-4S] cluster serves as cofactor.

In terms of biological role, the heterodimer acts as both an ATP-dependent DNA helicase and an ATP-dependent, dual-direction single-stranded exonuclease. Recognizes the chi site generating a DNA molecule suitable for the initiation of homologous recombination. The AddB subunit has 5' -&gt; 3' nuclease activity but not helicase activity. The chain is ATP-dependent helicase/deoxyribonuclease subunit B from Clostridium beijerinckii (strain ATCC 51743 / NCIMB 8052) (Clostridium acetobutylicum).